Reading from the N-terminus, the 391-residue chain is Ferrochelatase (391 aa).

Residues H196 and E281 each coordinate Fe cation.

The protein belongs to the ferrochelatase family.

The protein localises to the cytoplasm. It catalyses the reaction heme b + 2 H(+) = protoporphyrin IX + Fe(2+). The protein operates within porphyrin-containing compound metabolism; protoheme biosynthesis; protoheme from protoporphyrin-IX: step 1/1. Its function is as follows. Catalyzes the ferrous insertion into protoporphyrin IX. This chain is Ferrochelatase, found in Prochlorococcus marinus (strain MIT 9215).